An 811-amino-acid polypeptide reads, in one-letter code: DNA mismatch repair protein MutS (811 aa).

583–590 (GPNMAGKS) contributes to the ATP binding site.

The protein belongs to the DNA mismatch repair MutS family.

This protein is involved in the repair of mismatches in DNA. It is possible that it carries out the mismatch recognition step. This protein has a weak ATPase activity. The polypeptide is DNA mismatch repair protein MutS (Thermus thermophilus (strain ATCC BAA-163 / DSM 7039 / HB27)).